Here is a 477-residue protein sequence, read N- to C-terminus: Cysteine--tRNA ligase (477 aa).

C28 serves as a coordination point for Zn(2+). The short motif at 30–40 (PTVYDYAHIGN) is the 'HIGH' region element. Zn(2+) is bound by residues C213, H238, and E242. The 'KMSKS' region motif lies at 270 to 274 (KMSKS). Position 273 (K273) interacts with ATP.

This sequence belongs to the class-I aminoacyl-tRNA synthetase family. In terms of assembly, monomer. Requires Zn(2+) as cofactor.

The protein localises to the cytoplasm. The enzyme catalyses tRNA(Cys) + L-cysteine + ATP = L-cysteinyl-tRNA(Cys) + AMP + diphosphate. This Chlamydia trachomatis serovar D (strain ATCC VR-885 / DSM 19411 / UW-3/Cx) protein is Cysteine--tRNA ligase (cysS).